Here is a 671-residue protein sequence, read N- to C-terminus: Amidase chry2 (671 aa).

The active-site Nucleophile is cysteine 2. The 219-residue stretch at 2-220 (CGISAFITHP…PGHYLICRPN (219 aa)) folds into the Glutamine amidotransferase type-2 domain. An Asparagine synthetase domain is found at 251 to 639 (VRERLLEAVR…TQDAMDGAFN (389 aa)).

This sequence belongs to the asparagine synthetase family.

It functions in the pathway pigment biosynthesis. Functionally, amidase; part of the gene cluster that mediates the biosynthesis of the yellow pigment chrysogine. Pyruvic acid and anthranilic acid are likely substrates for the nonribosomal peptide synthetase chry1/NRPS14, with pyruvic acid adenylated by the first A domain and anthranilic acid by the second. If pyruvic acid and anthranilic acid are merged and released from chry1/NRPS14 by hydrolysis, a subsequent amidation would lead to 2-pyruvoylaminobenzamide. This process is probably catalyzed by the amidotransferase chry2 using glutamine as amino donor. The dehydrogenase chry5 that has a terminal berberine bridge domain for C-N cyclization could catalyze the cyclization of 2-pyruvoylaminobenzamide to yield acetyl-4(3H)-quinazolidinone. A final reduction of acetyl-4(3H)-quinazolidinone catalyzed by the oxidoreductase chry4 would result in chrysogine. The polypeptide is Amidase chry2 (Gibberella zeae (strain ATCC MYA-4620 / CBS 123657 / FGSC 9075 / NRRL 31084 / PH-1) (Wheat head blight fungus)).